The sequence spans 156 residues: Small ribosomal subunit protein uS7 (156 aa).

It belongs to the universal ribosomal protein uS7 family. As to quaternary structure, part of the 30S ribosomal subunit. Contacts proteins S9 and S11.

Its function is as follows. One of the primary rRNA binding proteins, it binds directly to 16S rRNA where it nucleates assembly of the head domain of the 30S subunit. Is located at the subunit interface close to the decoding center, probably blocks exit of the E-site tRNA. The chain is Small ribosomal subunit protein uS7 from Sinorhizobium medicae (strain WSM419) (Ensifer medicae).